Reading from the N-terminus, the 126-residue chain is Large ribosomal subunit protein bL17 (126 aa).

The protein belongs to the bacterial ribosomal protein bL17 family. Part of the 50S ribosomal subunit. Contacts protein L32.

This chain is Large ribosomal subunit protein bL17, found in Xylella fastidiosa (strain 9a5c).